The chain runs to 242 residues: uncharacterized protein (242 aa).

This sequence belongs to the IIV-6 415R family.

This is an uncharacterized protein from Invertebrate iridescent virus 6 (IIV-6).